The sequence spans 160 residues: Periplasmic nitrate reductase, electron transfer subunit (160 aa).

The signal sequence occupies residues 1-25; sequence MKTRIIFAALALAAAMPLLVSGVFA. Heme c contacts are provided by H73, C87, C90, H91, H108, C127, C130, and H131.

Belongs to the NapB family. In terms of assembly, component of the periplasmic nitrate reductase NapAB complex composed of NapA and NapB. Binds 2 heme C groups per subunit.

The protein localises to the periplasm. Its function is as follows. Electron transfer subunit of the periplasmic nitrate reductase complex NapAB. Receives electrons from the membrane-anchored tetraheme c-type NapC protein and transfers these to NapA subunit, thus allowing electron flow between membrane and periplasm. Essential for periplasmic nitrate reduction with nitrate as the terminal electron acceptor. This Azospirillum brasilense protein is Periplasmic nitrate reductase, electron transfer subunit.